The sequence spans 343 residues: MGNLPSAAKHCLNYQQLLREHLWSGDSVAGALDAAQEASQLPGLPEYVKIVEVGPRDGLQNEKVIVPTDIKIELINQLSQTGLSVIEVTSFVSSRWVPQMADHAEVMRGIRQYPGVRYPVLTPNLQGFQHAVAAGATEIAVFGAASESFSKKNINCSIEESMGRFQEVISSARHMDIPVRGYVSCALGCPYEGSITPQKVTEVSKRLYGMGCYEISLGDTIGVGTPGSMKMMLESVMKEIPPGALAVHCHDTYGQALANILTALQMGINVVDSAVSGLGGCPYAKGASGNVATEDLIYMLNGMGLNTGVDLYKVMEAGEFICKAVNKTTNSKVAQASFNARLE.

The N-myristoyl glycine moiety is linked to residue glycine 2. Positions valine 48–methionine 315 constitute a Pyruvate carboxyltransferase domain. Position 56 (arginine 56) interacts with substrate. Aspartate 57, histidine 248, and histidine 250 together coordinate a divalent metal cation. Residue cysteine 281 is part of the active site. Asparagine 290 is an a divalent metal cation binding site.

The protein belongs to the HMG-CoA lyase family. A divalent metal cation serves as cofactor.

Its subcellular location is the cytoplasm. The protein localises to the cytosol. It is found in the endoplasmic reticulum membrane. It catalyses the reaction (3S)-3-hydroxy-3-methylglutaryl-CoA = acetoacetate + acetyl-CoA. It participates in metabolic intermediate metabolism; (S)-3-hydroxy-3-methylglutaryl-CoA degradation; acetoacetate from (S)-3-hydroxy-3-methylglutaryl-CoA: step 1/1. In terms of biological role, non-mitochondrial 3-hydroxy-3-methylglutaryl-CoA lyase that catalyzes a cation-dependent cleavage of (S)-3-hydroxy-3-methylglutaryl-CoA into acetyl-CoA and acetoacetate, a key step in ketogenesis, the products of which support energy production in nonhepatic animal tissues. This chain is 3-hydroxy-3-methylglutaryl-CoA lyase, cytoplasmic (Hmgcll1), found in Mus musculus (Mouse).